We begin with the raw amino-acid sequence, 163 residues long: Cyclic pyranopterin monophosphate synthase (163 aa).

Substrate-binding positions include 76–78 (LCH) and 114–115 (ME). The active site involves Asp129.

Belongs to the MoaC family. As to quaternary structure, homohexamer; trimer of dimers.

The catalysed reaction is (8S)-3',8-cyclo-7,8-dihydroguanosine 5'-triphosphate = cyclic pyranopterin phosphate + diphosphate. It functions in the pathway cofactor biosynthesis; molybdopterin biosynthesis. Its function is as follows. Catalyzes the conversion of (8S)-3',8-cyclo-7,8-dihydroguanosine 5'-triphosphate to cyclic pyranopterin monophosphate (cPMP). This Desulfovibrio desulfuricans (strain ATCC 27774 / DSM 6949 / MB) protein is Cyclic pyranopterin monophosphate synthase.